The sequence spans 688 residues: UvrABC system protein C (688 aa).

Positions 1 to 14 (MSPLDQKNKPRGGA) are enriched in basic and acidic residues. Residues 1–20 (MSPLDQKNKPRGGADDLPPE) are disordered. In terms of domain architecture, GIY-YIG spans 71–149 (NAPGVYRMMN…IKRLRPRFNV (79 aa)). In terms of domain architecture, UVR spans 259–294 (QKVKTEISAAMQQASEDLDFERAAIYRDRLAALSHV).

Belongs to the UvrC family. Interacts with UvrB in an incision complex.

It localises to the cytoplasm. The UvrABC repair system catalyzes the recognition and processing of DNA lesions. UvrC both incises the 5' and 3' sides of the lesion. The N-terminal half is responsible for the 3' incision and the C-terminal half is responsible for the 5' incision. The chain is UvrABC system protein C from Mesorhizobium japonicum (strain LMG 29417 / CECT 9101 / MAFF 303099) (Mesorhizobium loti (strain MAFF 303099)).